Reading from the N-terminus, the 419-residue chain is Tyrosine--tRNA ligase (419 aa).

An L-tyrosine-binding site is contributed by tyrosine 34. The short motif at 39–48 (PTADSLHIGH) is the 'HIGH' region element. Positions 169, 173, and 176 each coordinate L-tyrosine. Positions 230-234 (KFGKT) match the 'KMSKS' region motif. Residue lysine 233 participates in ATP binding. One can recognise an S4 RNA-binding domain in the interval 352–419 (VPLVELLVSA…KKKYYLIRYA (68 aa)).

It belongs to the class-I aminoacyl-tRNA synthetase family. TyrS type 1 subfamily. As to quaternary structure, homodimer.

The protein localises to the cytoplasm. It carries out the reaction tRNA(Tyr) + L-tyrosine + ATP = L-tyrosyl-tRNA(Tyr) + AMP + diphosphate + H(+). Its function is as follows. Catalyzes the attachment of tyrosine to tRNA(Tyr) in a two-step reaction: tyrosine is first activated by ATP to form Tyr-AMP and then transferred to the acceptor end of tRNA(Tyr). This is Tyrosine--tRNA ligase (tyrS) from Geobacillus stearothermophilus (Bacillus stearothermophilus).